The chain runs to 59 residues: Large ribosomal subunit protein uL30 (59 aa).

The protein belongs to the universal ribosomal protein uL30 family. Part of the 50S ribosomal subunit.

The polypeptide is Large ribosomal subunit protein uL30 (Bacillus subtilis (strain 168)).